The sequence spans 1132 residues: Tyrosine-protein kinase JAK2 (1132 aa).

The interval 1 to 239 (MGMACLTMTE…RYRFRRFIQQ (239 aa)) is interaction with cytokine/interferon/growth hormone receptors. Positions 37 to 380 (PVLQVYLYHS…GYYRLTADAH (344 aa)) constitute an FERM domain. Position 119 is a phosphotyrosine; by autocatalysis (Tyr119). Tyr372 and Tyr373 each carry phosphotyrosine. Residues 401–482 (HGPISMDFAI…NLKDLLNCYQ (82 aa)) form the SH2; atypical domain. Ser523 carries the post-translational modification Phosphoserine. Residues 545 to 809 (LIFNESLGQG…AVIRDLNSLF (265 aa)) form the Protein kinase 1 domain. A phosphotyrosine mark is found at Tyr570 and Tyr813. A Protein kinase 2 domain is found at 849–1124 (LKFLQQLGKG…SFRDLSLRVD (276 aa)). ATP is bound at residue 855-863 (LGKGNFGSV). Tyr868 carries the phosphotyrosine; by autocatalysis modification. Residue Lys882 participates in ATP binding. Tyr966 and Tyr972 each carry phosphotyrosine; by autocatalysis. Asp976 serves as the catalytic Proton acceptor. Tyr1007 and Tyr1008 each carry phosphotyrosine; by autocatalysis.

This sequence belongs to the protein kinase superfamily. Tyr protein kinase family. JAK subfamily. In terms of assembly, interacts with IL23R, SKB1 and STAM2. Interacts with EPOR. Interacts with LYN. Interacts with SIRPA. Interacts with SH2B1. Interacts with TEC. Interacts with IFNGR2 (via intracellular domain). Interacts with LEPR (Isoform B). Interacts with HSP90AB1; promotes functional activation in a heat shock-dependent manner. Interacts with STRA6. Interacts with ASB2; the interaction targets JAK2 for Notch-induced proteasomal degradation. Interacts with MPL/TPOR. Mg(2+) is required as a cofactor. In terms of processing, autophosphorylated, leading to regulate its activity. Leptin promotes phosphorylation on tyrosine residues, including phosphorylation on Tyr-813. Autophosphorylation on Tyr-119 in response to EPO down-regulates its kinase activity. Autophosphorylation on Tyr-868, Tyr-966 and Tyr-972 in response to growth hormone (GH) are required for maximal kinase activity. Also phosphorylated by TEC. Phosphorylated on tyrosine residues in response to interferon gamma signaling. Phosphorylated on tyrosine residues in response to a signaling cascade that is activated by increased cellular retinol. Undergoes Notch-induced ubiquitination and subsequent proteasomal degradation which is mediated by ASB1 or ASB2, the substrate-recognition components of probable ECS E3 ubiquitin-protein ligase complexes. In terms of tissue distribution, ubiquitously expressed throughout most tissues.

Its subcellular location is the endomembrane system. It localises to the cytoplasm. The protein localises to the nucleus. The enzyme catalyses L-tyrosyl-[protein] + ATP = O-phospho-L-tyrosyl-[protein] + ADP + H(+). Its activity is regulated as follows. Regulated by autophosphorylation, can both activate or decrease activity. Heme regulates its activity by enhancing the phosphorylation on Tyr-1007 and Tyr-1008. In terms of biological role, non-receptor tyrosine kinase involved in various processes such as cell growth, development, differentiation or histone modifications. Mediates essential signaling events in both innate and adaptive immunity. In the cytoplasm, plays a pivotal role in signal transduction via its association with type I receptors such as growth hormone (GHR), prolactin (PRLR), leptin (LEPR), erythropoietin (EPOR), thrombopoietin receptor (MPL/TPOR); or type II receptors including IFN-alpha, IFN-beta, IFN-gamma and multiple interleukins. Following ligand-binding to cell surface receptors, phosphorylates specific tyrosine residues on the cytoplasmic tails of the receptor, creating docking sites for STATs proteins. Subsequently, phosphorylates the STATs proteins once they are recruited to the receptor. Phosphorylated STATs then form homodimer or heterodimers and translocate to the nucleus to activate gene transcription. For example, cell stimulation with erythropoietin (EPO) during erythropoiesis leads to JAK2 autophosphorylation, activation, and its association with erythropoietin receptor (EPOR) that becomes phosphorylated in its cytoplasmic domain. Then, STAT5 (STAT5A or STAT5B) is recruited, phosphorylated and activated by JAK2. Once activated, dimerized STAT5 translocates into the nucleus and promotes the transcription of several essential genes involved in the modulation of erythropoiesis. Part of a signaling cascade that is activated by increased cellular retinol and that leads to the activation of STAT5 (STAT5A or STAT5B). In addition, JAK2 mediates angiotensin-2-induced ARHGEF1 phosphorylation. Plays a role in cell cycle by phosphorylating CDKN1B. Cooperates with TEC through reciprocal phosphorylation to mediate cytokine-driven activation of FOS transcription. In the nucleus, plays a key role in chromatin by specifically mediating phosphorylation of 'Tyr-41' of histone H3 (H3Y41ph), a specific tag that promotes exclusion of CBX5 (HP1 alpha) from chromatin. Up-regulates the potassium voltage-gated channel activity of KCNA3. In Mus musculus (Mouse), this protein is Tyrosine-protein kinase JAK2.